Consider the following 468-residue polypeptide: MNTQPNKLKLSLYNTLTRQKEIFEPAEPDRVTMYVCGPTVYNRSHIGNARPAVVFDVLARLLRRLYRHVVYARNITDIEDKIIAAAKEAGVDISVITEKYARIYREDMGALGVLAPDIEPKATESIAEMISMMERLIASGNAYAAEGHVLFNVPSFAEYGRLSGRDRDDMIAGARVEVAPYKKDPADFVLWKPSTPEQPGWDSPWGRGRPGWHIECSAMIEKHLGETIDIHGGGIDLQFPHHENELAQSSCAHGHTPLARFWLHNGFVNMGSEKMSKSLGNVLLVHELLAQAPGEAVRLALLNAHYRQPLDWSDEGLAQAKRMLDRLYGALRALSDVKAEPTNDAAPDAFMEALADDLNTPKALAVLFDLAKRANTETDPGTKAQLKAALIGAGRLLGVLEMDPEAWFAGAGAASHIDGEEVERLIAARNAARKAKDFAEADRIRGALAEMGVAIEDGPQGTSWRVAS.

Zn(2+) is bound at residue C36. Positions P38–N48 match the 'HIGH' region motif. Zn(2+) contacts are provided by C216, H241, and E245. Residues K274–S278 carry the 'KMSKS' region motif. K277 is an ATP binding site.

The protein belongs to the class-I aminoacyl-tRNA synthetase family. As to quaternary structure, monomer. Requires Zn(2+) as cofactor.

The protein resides in the cytoplasm. It catalyses the reaction tRNA(Cys) + L-cysteine + ATP = L-cysteinyl-tRNA(Cys) + AMP + diphosphate. The polypeptide is Cysteine--tRNA ligase (Parvibaculum lavamentivorans (strain DS-1 / DSM 13023 / NCIMB 13966)).